The sequence spans 72 residues: UPF0270 protein YheU (72 aa).

Belongs to the UPF0270 family.

This is UPF0270 protein YheU from Salmonella agona (strain SL483).